Here is a 548-residue protein sequence, read N- to C-terminus: Acetamidase (548 aa).

Residues Lys129 and Ser204 each act as charge relay system in the active site. Ser228 (acyl-ester intermediate) is an active-site residue.

It belongs to the amidase family.

The enzyme catalyses a monocarboxylic acid amide + H2O = a monocarboxylate + NH4(+). It carries out the reaction acetamide + H2O = acetate + NH4(+). In terms of biological role, allows acetamide to be used as a sole carbon or nitrogen source. This is Acetamidase (amdS) from Emericella nidulans (strain FGSC A4 / ATCC 38163 / CBS 112.46 / NRRL 194 / M139) (Aspergillus nidulans).